The chain runs to 433 residues: 28S rRNA (cytosine-C(5))-methyltransferase (433 aa).

Residues 235-241 (CAAPGMK), glutamate 259, aspartate 286, and aspartate 304 contribute to the S-adenosyl-L-methionine site. The active-site Nucleophile is the cysteine 357.

Belongs to the class I-like SAM-binding methyltransferase superfamily. RsmB/NOP family.

It carries out the reaction a cytidine in 28S rRNA + S-adenosyl-L-methionine = a 5-methylcytidine in 28S rRNA + S-adenosyl-L-homocysteine + H(+). In terms of biological role, S-adenosyl-L-methionine-dependent methyltransferase that specifically methylates the C(5) position of a cytosine in 28S rRNA. This is 28S rRNA (cytosine-C(5))-methyltransferase from Drosophila melanogaster (Fruit fly).